The chain runs to 426 residues: MELVHSATFPCKQKLLIAVTIATSLLTIIPLLYPLLEDPNFFLKQQPPSQSSIINLENGVVTSHDSCDIFSGEWVPNPEAPYYTNTTCWAIHEHQNCMKFGRPDTDFIKWKWKPYGCEDGLPVFDPVRFLEIVRGKTMAFVGDSVSRNHMQSLICLLSQVEYPMDASVKNDDYFKRWTYETYNFTIAAFWTPHLVKSKEPDQTQPKHIDIFDLYLDEADESWTADIGDFDFVIISSGHWHYRPSVYYENRTITGCHYCQLPNITDLTMFYGYRKAFRTAFKAILDSESFKGVMYLRSFAPSHFEGGLWNEGGDCLRKQPYRSNETQDETTMKLHKIQLEEFWRAEEEAKKKGKRLRLLDTTQAMWLRPDGHPSRYGHIPEANVTLYNDCVHWCLPGPIDNLNDFLLAMLKREEDKGFLAQVRKMLS.

Residues leucine 15–leucine 35 traverse the membrane as a helical; Signal-anchor for type II membrane protein segment. The GDS motif motif lies at glycine 142–serine 144. The short motif at aspartate 388–asparagine 402 is the DCXHWCLPGXXDXWN motif element.

The protein belongs to the PC-esterase family. TBL subfamily.

It localises to the membrane. Its function is as follows. May act as a bridging protein that binds pectin and other cell wall polysaccharides. Probably involved in maintaining esterification of pectins. May be involved in the specific O-acetylation of cell wall polymers. The chain is Protein trichome birefringence-like 19 (TBL19) from Arabidopsis thaliana (Mouse-ear cress).